We begin with the raw amino-acid sequence, 307 residues long: Cytochrome c1 1, heme protein, mitochondrial (307 aa).

The transit peptide at 1-64 (MVGGGVIQQI…LLSFSTVASA (64 aa)) directs the protein to the mitochondrion. At 65-270 (DEAEHGLESP…EPEMEERKLM (206 aa)) the chain is on the mitochondrial intermembrane side. A Cytochrome c domain is found at 90 to 246 (ASIRRGHQVY…YEDGVPATEA (157 aa)). Heme c contacts are provided by Cys-103, Cys-106, His-107, and Met-226. Residues 271–288 (GFKWIFLLSLALLQAAYY) form a helical membrane-spanning segment. At 289-307 (RRLKWSVLKSRKLVLDVVN) the chain is on the mitochondrial matrix side.

Belongs to the cytochrome c family. In terms of assembly, component of the ubiquinol-cytochrome c oxidoreductase (cytochrome b-c1 complex, complex III, CIII), a multisubunit enzyme composed of 10 subunits. The complex is composed of 3 respiratory subunits cytochrome b (MT-CYB), cytochrome c1 (CYC1-1 or CYC1-2) and Rieske protein (UCR1-1 or UCR1-2), 2 core protein subunits MPPalpha1 (or MPPalpha2) and MPPB, and 5 low-molecular weight protein subunits QCR7-1 (or QCR7-2), UCRQ-1 (or UCRQ-2), QCR9, UCRY and probably QCR6-1 (or QCR6-2). The complex exists as an obligatory dimer and forms supercomplexes (SCs) in the inner mitochondrial membrane with NADH-ubiquinone oxidoreductase (complex I, CI), resulting in different assemblies (supercomplexes SCI(1)III(2) and SCI(2)III(4)). Binds 1 heme c group covalently per subunit.

Its subcellular location is the mitochondrion inner membrane. In terms of biological role, component of the ubiquinol-cytochrome c oxidoreductase, a multisubunit transmembrane complex that is part of the mitochondrial electron transport chain which drives oxidative phosphorylation. The respiratory chain contains 3 multisubunit complexes succinate dehydrogenase (complex II, CII), ubiquinol-cytochrome c oxidoreductase (cytochrome b-c1 complex, complex III, CIII) and cytochrome c oxidase (complex IV, CIV), that cooperate to transfer electrons derived from NADH and succinate to molecular oxygen, creating an electrochemical gradient over the inner membrane that drives transmembrane transport and the ATP synthase. The cytochrome b-c1 complex catalyzes electron transfer from ubiquinol to cytochrome c, linking this redox reaction to translocation of protons across the mitochondrial inner membrane, with protons being carried across the membrane as hydrogens on the quinol. In the process called Q cycle, 2 protons are consumed from the matrix, 4 protons are released into the intermembrane space and 2 electrons are passed to cytochrome c. Cytochrome c1 is a catalytic core subunit containing a c-type heme. It transfers electrons from the [2Fe-2S] iron-sulfur cluster of the Rieske protein to cytochrome c. This is Cytochrome c1 1, heme protein, mitochondrial (CYC1-1) from Arabidopsis thaliana (Mouse-ear cress).